The primary structure comprises 689 residues: Protein asunder (689 aa).

The stretch at 521–550 (NGARLKLSKAKDQYRLLYRELEQLIQLNAT) forms a coiled coil. 2 disordered regions span residues 592-619 (PERL…SKRR) and 665-689 (GTKD…SVRS). Residues 599-614 (SSVGASGSSSSNSLLK) are compositionally biased toward low complexity. A Nuclear localization signal (NLS) motif is present at residues 613–619 (LKASKRR).

Belongs to the Integrator subunit 13 family. As to quaternary structure, belongs to the multiprotein complex Integrator, at least composed of IntS1, IntS2, IntS3, IntS4, omd/IntS5, IntS6, defl/IntS7, IntS8, IntS9, IntS10, IntS11, IntS12, asun/IntS13, IntS14 and IntS15. The core complex associates with protein phosphatase 2A subunits mts/PP2A and Pp2A-29B, to form the Integrator-PP2A (INTAC) complex. In terms of processing, phosphorylated. In terms of tissue distribution, expressed in nurse cells at stages 9-10 of oogenesis and exported to the oocyte. Also expressed in the follicle cells surrounding the oocyte.

The protein resides in the nucleus. It is found in the cytoplasm. The protein localises to the perinuclear region. Its function is as follows. Component of the integrator complex, a multiprotein complex that terminates RNA polymerase II (Pol II) transcription in the promoter-proximal region of genes. The integrator complex provides a quality checkpoint during transcription elongation by driving premature transcription termination of transcripts that are unfavorably configured for transcriptional elongation: the complex terminates transcription by (1) catalyzing dephosphorylation of the C-terminal domain (CTD) of Pol II subunit Polr2A/Rbp1 and Spt5, and (2) degrading the exiting nascent RNA transcript via endonuclease activity. The integrator complex is also involved in the 3'-end processing of the U7 snRNA, and also the spliceosomal snRNAs U1, U2, U4 and U5. Plays a role as a regulator of spermatogenesis. Crucial regulator of the mitotic cell cycle and development. Required for the correct dynein-dynactin perinuclear localization important for nucleus-centrosome coupling that occur upon meiotic progression of primary spermatocytes. Plays a role in sperm motility and fertility. May have a role in the PNG/PLU/GNU pathway. The sequence is that of Protein asunder from Drosophila melanogaster (Fruit fly).